A 96-amino-acid chain; its full sequence is Co-chaperonin GroES (96 aa).

This sequence belongs to the GroES chaperonin family. As to quaternary structure, heptamer of 7 subunits arranged in a ring. Interacts with the chaperonin GroEL.

Its subcellular location is the cytoplasm. Together with the chaperonin GroEL, plays an essential role in assisting protein folding. The GroEL-GroES system forms a nano-cage that allows encapsulation of the non-native substrate proteins and provides a physical environment optimized to promote and accelerate protein folding. GroES binds to the apical surface of the GroEL ring, thereby capping the opening of the GroEL channel. This is Co-chaperonin GroES from Coxiella burnetii (strain Dugway 5J108-111).